The sequence spans 103 residues: Matrix Gla protein (103 aa).

Residues 1-19 (MKSLLPLAILAALAVAALC) form the signal peptide. Residue E21 is modified to 4-carboxyglutamate. Residues S22, S25, and S28 each carry the phosphoserine modification. Positions 51 to 97 (HAKAQERVRELNKPAQEINREACDDYKLCERYALIYGYNAAYNRYFR) constitute a Gla domain. E56, E60, E67, and E71 each carry 4-carboxyglutamate. A disulfide bond links C73 and C79.

It belongs to the osteocalcin/matrix Gla protein family. Post-translationally, requires vitamin K-dependent gamma-carboxylation for its function.

It localises to the secreted. Functionally, associates with the organic matrix of bone and cartilage. Thought to act as an inhibitor of bone formation. The chain is Matrix Gla protein (Mgp) from Rattus norvegicus (Rat).